A 519-amino-acid polypeptide reads, in one-letter code: Ent-kaurene oxidase (519 aa).

Residues 1 to 10 (MDTLLSLQAV) are Chloroplast intermembrane-facing. Residues 11 to 31 (PAAAAIGGPVVAIGGITLFFI) form a helical membrane-spanning segment. Topologically, residues 32–519 (REYVKDQRKK…PRLRDRVCVS (488 aa)) are cytoplasmic. Heme is bound at residue C458.

The protein belongs to the cytochrome P450 family. Heme serves as cofactor.

It localises to the plastid. It is found in the chloroplast outer membrane. It carries out the reaction ent-kaur-16-ene + 3 reduced [NADPH--hemoprotein reductase] + 3 O2 = ent-kaur-16-en-19-oate + 3 oxidized [NADPH--hemoprotein reductase] + 4 H2O + 4 H(+). Its pathway is plant hormone biosynthesis; gibberellin biosynthesis. In terms of biological role, catalyzes three successive oxidations of the 4-methyl group of ent-kaurene giving kaurenoic acid, a key step in gibberellins (GAs) biosynthesis. GAs, which are involved many processes, including stem elongation, play a central role in plant development. This is Ent-kaurene oxidase from Salvia miltiorrhiza (Chinese sage).